Consider the following 566-residue polypeptide: DNA ligase B (566 aa).

The active-site N6-AMP-lysine intermediate is lysine 125.

This sequence belongs to the NAD-dependent DNA ligase family. LigB subfamily.

The catalysed reaction is NAD(+) + (deoxyribonucleotide)n-3'-hydroxyl + 5'-phospho-(deoxyribonucleotide)m = (deoxyribonucleotide)n+m + AMP + beta-nicotinamide D-nucleotide.. Its function is as follows. Catalyzes the formation of phosphodiester linkages between 5'-phosphoryl and 3'-hydroxyl groups in double-stranded DNA using NAD as a coenzyme and as the energy source for the reaction. The chain is DNA ligase B from Pseudomonas putida (strain ATCC 47054 / DSM 6125 / CFBP 8728 / NCIMB 11950 / KT2440).